Reading from the N-terminus, the 581-residue chain is La-related protein 7 (581 aa).

M1 carries the N-acetylmethionine modification. The segment covering 1–10 (METESGNQKN) has biased composition (polar residues). Disordered stretches follow at residues 1 to 28 (METE…KKKR), 188 to 368 (NPPE…ERHK), and 410 to 440 (KSES…CPTQ). The region spanning 28–122 (RSRVKQVLAD…KPLGERPKDE (95 aa)) is the HTH La-type RNA-binding domain. Residues 125–203 (RTVYVELLPK…PRKPGIFPKT (79 aa)) form the RRM domain. The span at 219–228 (KKKKKKKGRM) shows a compositional bias: basic residues. Positions 229–240 (KKEDNVQAKEEN) are enriched in basic and acidic residues. K237 participates in a covalent cross-link: Glycyl lysine isopeptide (Lys-Gly) (interchain with G-Cter in SUMO2). Position 257 is a phosphothreonine (T257). Phosphoserine is present on residues S258, S261, S273, S298, S299, and S300. The span at 316–335 (IQKDIIKEPSEASKENRDIE) shows a compositional bias: basic and acidic residues. S337 carries the post-translational modification Phosphoserine. Position 338 is a phosphothreonine (T338). S351 carries the post-translational modification Phosphoserine. Positions 354-367 (KTKRKHKKKHKERH) are enriched in basic residues. K410 participates in a covalent cross-link: Glycyl lysine isopeptide (Lys-Gly) (interchain with G-Cter in SUMO2). The region spanning 449–562 (QFVSGVIVKI…TEKLITKAEK (114 aa)) is the xRRM domain.

Belongs to the LARP7 family. As to quaternary structure, core component of the 7SK RNP complex, at least composed of 7SK RNA, LARP7, MEPCE, HEXIM1 (or HEXIM2) and P-TEFb (composed of CDK9 and CCNT1/cyclin-T1). Interacts with METTL16. Interacts with RBM7; upon genotoxic stress this interaction is enhanced, triggering the release of inactive P-TEFb complex from the core, yielding to P-TEFb complex activation. Associates with box C/D small nucleolar ribonucleoprotein (snoRNP) complexes.

The protein resides in the nucleus. It is found in the nucleoplasm. RNA-binding protein that specifically binds distinct small nuclear RNA (snRNAs) and regulates their processing and function. Specifically binds the 7SK snRNA (7SK RNA) and acts as a core component of the 7SK ribonucleoprotein (RNP) complex, thereby acting as a negative regulator of transcription elongation by RNA polymerase II. The 7SK RNP complex sequesters the positive transcription elongation factor b (P-TEFb) in a large inactive 7SK RNP complex preventing RNA polymerase II phosphorylation and subsequent transcriptional elongation. The 7SK RNP complex also promotes snRNA gene transcription by RNA polymerase II via interaction with the little elongation complex (LEC). LARP7 specifically binds to the highly conserved 3'-terminal U-rich stretch of 7SK RNA; on stimulation, remains associated with 7SK RNA, whereas P-TEFb is released from the complex. LARP7 also acts as a regulator of mRNA splicing fidelity by promoting U6 snRNA processing. Specifically binds U6 snRNAs and associates with a subset of box C/D RNP complexes: promotes U6 snRNA 2'-O-methylation by facilitating U6 snRNA loading into box C/D RNP complexes. U6 snRNA 2'-O-methylation is required for mRNA splicing fidelity. Binds U6 snRNAs with a 5'-CAGGG-3' sequence motif. U6 snRNA processing is required for spermatogenesis. In Macaca fascicularis (Crab-eating macaque), this protein is La-related protein 7.